We begin with the raw amino-acid sequence, 274 residues long: Orotidine 5'-phosphate decarboxylase (274 aa).

Catalysis depends on lysine 95, which acts as the Proton donor.

Belongs to the OMP decarboxylase family. Type 2 subfamily.

The catalysed reaction is orotidine 5'-phosphate + H(+) = UMP + CO2. It functions in the pathway pyrimidine metabolism; UMP biosynthesis via de novo pathway; UMP from orotate: step 2/2. The chain is Orotidine 5'-phosphate decarboxylase (pyrF) from Mycobacterium bovis (strain ATCC BAA-935 / AF2122/97).